The chain runs to 256 residues: Floral homeotic protein APETALA 1-1 (256 aa).

In terms of domain architecture, MADS-box spans 1–61 (MGRGRVQLKR…GKLFEYSTDS (61 aa)). A K-box domain is found at 88-178 (NTNWSMEYNR…SKQIKEREKV (91 aa)).

Homodimer capable of binding to CArG-box sequences. In terms of tissue distribution, expressed in some of the meristems of arrest-stage broccoli heads.

It is found in the nucleus. In terms of biological role, transcription factor that promotes early floral meristem identity in synergy with LEAFY. Displays a redundant function with CAULIFLOWER in the up-regulation of LEAFY. Required subsequently for the transition of an inflorescence meristem into a floral meristem, and for the normal development of sepals and petals in flowers. Regulates positively B class homeotic proteins. This Brassica oleracea var. italica (Broccoli) protein is Floral homeotic protein APETALA 1-1 (1AP1).